Reading from the N-terminus, the 585-residue chain is A-type ATP synthase subunit A (585 aa).

231-238 serves as a coordination point for ATP; the sequence is GPFGSGKT.

Belongs to the ATPase alpha/beta chains family. As to quaternary structure, has multiple subunits with at least A(3), B(3), C, D, E, F, H, I and proteolipid K(x).

The protein resides in the cell membrane. It catalyses the reaction ATP + H2O + 4 H(+)(in) = ADP + phosphate + 5 H(+)(out). Its function is as follows. Component of the A-type ATP synthase that produces ATP from ADP in the presence of a proton gradient across the membrane. The A chain is the catalytic subunit. The sequence is that of A-type ATP synthase subunit A from Thermococcus sibiricus (strain DSM 12597 / MM 739).